A 423-amino-acid polypeptide reads, in one-letter code: MSKIKQVIAREVLDSRGFPTVEADVILTSGVMGRAAVPSGASTGSHEAVELRDGGARYMGKGVLKAVANVNKIAKKITGMEASDIRLIDDTMIALDGTPNKGKFGANAILAVSMAVLRAGAADKKMPLYDYIRKIYAIKEKNYLLPVPMLNIINGGKHADSGLDVQEFMIVPNVSKSFKEGLREATEVYHTLKGILKAKGMVTAVGDEGGFAPHITKHEDVLKTIMDACKKAGHSQIKLALDCAASEFYKNGKYTFEKKQVSSKDMTKVYSSWVKKYPIVSIEDPLHEDDWDGWLHITKELGKKIRLVGDDLFVTNPERLEEGIEKKTANAILIKLNQIGSVSETIDVINMAHKAGYACVISHRSGETEDAFIADLAVATNAGAIKTGAPCRSERNAKYNRLLQIEQELGKKASYAKTKVFKK.

Glutamine 166 is a (2R)-2-phosphoglycerate binding site. Glutamate 208 (proton donor) is an active-site residue. 3 residues coordinate Mg(2+): aspartate 242, glutamate 283, and aspartate 310. (2R)-2-phosphoglycerate-binding residues include lysine 335, arginine 364, serine 365, and lysine 386. Residue lysine 335 is the Proton acceptor of the active site.

It belongs to the enolase family. It depends on Mg(2+) as a cofactor.

The protein resides in the cytoplasm. The protein localises to the secreted. Its subcellular location is the cell surface. It carries out the reaction (2R)-2-phosphoglycerate = phosphoenolpyruvate + H2O. It participates in carbohydrate degradation; glycolysis; pyruvate from D-glyceraldehyde 3-phosphate: step 4/5. Catalyzes the reversible conversion of 2-phosphoglycerate (2-PG) into phosphoenolpyruvate (PEP). It is essential for the degradation of carbohydrates via glycolysis. The protein is Enolase of Elusimicrobium minutum (strain Pei191).